We begin with the raw amino-acid sequence, 124 residues long: Conotoxin Im14.2 (124 aa).

A signal peptide spans methionine 1–glycine 20. The propeptide occupies isoleucine 21 to lysine 99.

Post-translationally, contain 2 disulfide bonds. In terms of tissue distribution, expressed by the venom duct.

It localises to the secreted. In terms of biological role, probable neurotoxin. The polypeptide is Conotoxin Im14.2 (Conus imperialis (Imperial cone)).